The chain runs to 155 residues: Interleukin-2 (155 aa).

A signal peptide spans 1-20 (MYKMQLLSCIALTLVLVANS). Thr-24 is a glycosylation site (O-linked (GalNAc...) threonine). The cysteines at positions 79 and 127 are disulfide-linked. A glycan (N-linked (GlcNAc...) asparagine) is linked at Asn-112.

Belongs to the IL-2 family.

The protein localises to the secreted. In terms of biological role, cytokine produced by activated CD4-positive helper T-cells and to a lesser extend activated CD8-positive T-cells and natural killer (NK) cells that plays pivotal roles in the immune response and tolerance. Binds to a receptor complex composed of either the high-affinity trimeric IL-2R (IL2RA/CD25, IL2RB/CD122 and IL2RG/CD132) or the low-affinity dimeric IL-2R (IL2RB and IL2RG). Interaction with the receptor leads to oligomerization and conformation changes in the IL-2R subunits resulting in downstream signaling starting with phosphorylation of JAK1 and JAK3. In turn, JAK1 and JAK3 phosphorylate the receptor to form a docking site leading to the phosphorylation of several substrates including STAT5. This process leads to activation of several pathways including STAT, phosphoinositide-3-kinase/PI3K and mitogen-activated protein kinase/MAPK pathways. Functions as a T-cell growth factor and can increase NK-cell cytolytic activity as well. Promotes strong proliferation of activated B-cells and subsequently immunoglobulin production. Plays a pivotal role in regulating the adaptive immune system by controlling the survival and proliferation of regulatory T-cells, which are required for the maintenance of immune tolerance. Moreover, participates in the differentiation and homeostasis of effector T-cell subsets, including Th1, Th2, Th17 as well as memory CD8-positive T-cells. The chain is Interleukin-2 (IL2) from Canis lupus familiaris (Dog).